Consider the following 78-residue polypeptide: Translation initiation factor IF-1 (78 aa).

Residues 2–78 (SKNNLNETES…TQARITYRFK (77 aa)) form the S1-like domain.

Belongs to the IF-1 family. Component of the 30S ribosomal translation pre-initiation complex which assembles on the 30S ribosome in the order IF-2 and IF-3, IF-1 and N-formylmethionyl-tRNA(fMet); mRNA recruitment can occur at any time during PIC assembly.

The protein resides in the cytoplasm. Functionally, one of the essential components for the initiation of protein synthesis. Stabilizes the binding of IF-2 and IF-3 on the 30S subunit to which N-formylmethionyl-tRNA(fMet) subsequently binds. Helps modulate mRNA selection, yielding the 30S pre-initiation complex (PIC). Upon addition of the 50S ribosomal subunit IF-1, IF-2 and IF-3 are released leaving the mature 70S translation initiation complex. This chain is Translation initiation factor IF-1, found in Aster yellows witches'-broom phytoplasma (strain AYWB).